Here is a 74-residue protein sequence, read N- to C-terminus: UPF0352 protein PM1884 (74 aa).

The protein belongs to the UPF0352 family.

This Pasteurella multocida (strain Pm70) protein is UPF0352 protein PM1884.